Reading from the N-terminus, the 230-residue chain is Geranylgeranylglyceryl phosphate synthase (230 aa).

Residue lysine 13 participates in sn-glycerol 1-phosphate binding. Mg(2+) is bound by residues aspartate 15 and threonine 41. Residues 161–166 (YIEYSG), glycine 191, and 211–212 (GN) contribute to the sn-glycerol 1-phosphate site.

This sequence belongs to the GGGP/HepGP synthase family. Group I subfamily. Mg(2+) serves as cofactor.

It localises to the cytoplasm. It carries out the reaction sn-glycerol 1-phosphate + (2E,6E,10E)-geranylgeranyl diphosphate = sn-3-O-(geranylgeranyl)glycerol 1-phosphate + diphosphate. It participates in membrane lipid metabolism; glycerophospholipid metabolism. In terms of biological role, prenyltransferase that catalyzes the transfer of the geranylgeranyl moiety of geranylgeranyl diphosphate (GGPP) to the C3 hydroxyl of sn-glycerol-1-phosphate (G1P). This reaction is the first ether-bond-formation step in the biosynthesis of archaeal membrane lipids. The protein is Geranylgeranylglyceryl phosphate synthase of Methanoculleus marisnigri (strain ATCC 35101 / DSM 1498 / JR1).